The following is a 384-amino-acid chain: N-acetylneuraminate epimerase (384 aa).

A signal peptide spans 1–29 (MGMQMKNFKKMMTLMALCLSVAITTSGYA). Kelch repeat units lie at residues 51–95 (VIYV…VFLN), 97–149 (ELYV…VKLN), 151–184 (TMVL…KVIY), 185–230 (NYFN…VMEN), 233–282 (LMLI…LAGA), 304–353 (QNYT…SYGD), and 355–384 (VFLI…LLIK). The Proton acceptor role is filled by glutamate 239.

The protein belongs to the NanM family. As to quaternary structure, homodimer.

The protein resides in the periplasm. The enzyme catalyses N-acetyl-alpha-neuraminate = N-acetyl-beta-neuraminate. Its function is as follows. Converts alpha-N-acetylneuranimic acid (Neu5Ac) to the beta-anomer, accelerating the equilibrium between the alpha- and beta-anomers. Probably facilitates sialidase-negative bacteria to compete successfully for limited amounts of extracellular Neu5Ac, which is likely taken up in the beta-anomer. In addition, the rapid removal of sialic acid from solution might be advantageous to the bacterium to damp down host responses. The sequence is that of N-acetylneuraminate epimerase from Salmonella enteritidis PT4 (strain P125109).